We begin with the raw amino-acid sequence, 240 residues long: Methylthioribulose-1-phosphate dehydratase (240 aa).

Cys-99 serves as a coordination point for substrate. The Zn(2+) site is built by His-116 and His-118. Catalysis depends on Glu-145, which acts as the Proton donor/acceptor. Residue His-201 participates in Zn(2+) binding.

Belongs to the aldolase class II family. MtnB subfamily. Requires Zn(2+) as cofactor.

Its subcellular location is the cytoplasm. The enzyme catalyses 5-(methylsulfanyl)-D-ribulose 1-phosphate = 5-methylsulfanyl-2,3-dioxopentyl phosphate + H2O. It participates in amino-acid biosynthesis; L-methionine biosynthesis via salvage pathway; L-methionine from S-methyl-5-thio-alpha-D-ribose 1-phosphate: step 2/6. In terms of biological role, catalyzes the dehydration of methylthioribulose-1-phosphate (MTRu-1-P) into 2,3-diketo-5-methylthiopentyl-1-phosphate (DK-MTP-1-P). This chain is Methylthioribulose-1-phosphate dehydratase, found in Ajellomyces capsulatus (strain H143) (Darling's disease fungus).